Consider the following 671-residue polypeptide: Arginine--tRNA ligase (671 aa).

A 'HIGH' region motif is present at residues 124-134 (PNVAKPMHVGH). The disordered stretch occupies residues 223-254 (KSDAKTAKEVSDQSESDENLKPKDKKKLRKNA). A compositionally biased stretch (basic and acidic residues) spans 224–233 (SDAKTAKEVS).

This sequence belongs to the class-I aminoacyl-tRNA synthetase family. Monomer.

Its subcellular location is the cytoplasm. The catalysed reaction is tRNA(Arg) + L-arginine + ATP = L-arginyl-tRNA(Arg) + AMP + diphosphate. This chain is Arginine--tRNA ligase, found in Rhodopirellula baltica (strain DSM 10527 / NCIMB 13988 / SH1).